The primary structure comprises 500 residues: Transcription termination factor MTERF8, chloroplastic (500 aa).

Residues 1–64 constitute a chloroplast transit peptide; that stretch reads MVILSLVSCS…NHREPALTFR (64 aa).

It belongs to the mTERF family.

Its subcellular location is the plastid. It localises to the chloroplast. In terms of biological role, transcription termination factor that is transcriptionally active in chloroplasts. This Arabidopsis thaliana (Mouse-ear cress) protein is Transcription termination factor MTERF8, chloroplastic.